Consider the following 281-residue polypeptide: ATP phosphoribosyltransferase (281 aa).

The protein belongs to the ATP phosphoribosyltransferase family. Long subfamily. Mg(2+) is required as a cofactor.

The protein resides in the cytoplasm. It catalyses the reaction 1-(5-phospho-beta-D-ribosyl)-ATP + diphosphate = 5-phospho-alpha-D-ribose 1-diphosphate + ATP. Its pathway is amino-acid biosynthesis; L-histidine biosynthesis; L-histidine from 5-phospho-alpha-D-ribose 1-diphosphate: step 1/9. Feedback inhibited by histidine. Its function is as follows. Catalyzes the condensation of ATP and 5-phosphoribose 1-diphosphate to form N'-(5'-phosphoribosyl)-ATP (PR-ATP). Has a crucial role in the pathway because the rate of histidine biosynthesis seems to be controlled primarily by regulation of HisG enzymatic activity. This Natronomonas pharaonis (strain ATCC 35678 / DSM 2160 / CIP 103997 / JCM 8858 / NBRC 14720 / NCIMB 2260 / Gabara) (Halobacterium pharaonis) protein is ATP phosphoribosyltransferase.